The chain runs to 629 residues: RNA polymerase sigma factor RpoD (629 aa).

Residues 183–228 (HNGLDEDFSDEDDEEESSNADVEDNEDEEDNESESTSDSSDSDNSI) form a disordered region. Residues 187 to 228 (DEDFSDEDDEEESSNADVEDNEDEEDNESESTSDSSDSDNSI) show a composition bias toward acidic residues. A sigma-70 factor domain-2 region spans residues 395 to 465 (MVEANLRLVI…TRSIADQART (71 aa)). Positions 419–422 (DLIQ) match the Interaction with polymerase core subunit RpoC motif. The sigma-70 factor domain-3 stretch occupies residues 474-550 (ETINKLNRIS…DSTLELPLDS (77 aa)). The segment at 563–616 (VLEGLTPREAKVLRMRFGIDMNTDHTLEEVGKQFDVTRERIRQIEAKALRKLRH) is sigma-70 factor domain-4. The H-T-H motif DNA-binding region spans 589–608 (LEEVGKQFDVTRERIRQIEA).

It belongs to the sigma-70 factor family. RpoD/SigA subfamily. As to quaternary structure, interacts transiently with the RNA polymerase catalytic core.

It localises to the cytoplasm. Its function is as follows. Sigma factors are initiation factors that promote the attachment of RNA polymerase to specific initiation sites and are then released. This sigma factor is the primary sigma factor during exponential growth. The chain is RNA polymerase sigma factor RpoD from Haemophilus influenzae (strain ATCC 51907 / DSM 11121 / KW20 / Rd).